A 525-amino-acid chain; its full sequence is Allantoate deiminase (525 aa).

Residues 1–53 (MAVPHPSSSSSRSHPFLSHVYHTSFHHHHHHNHPSLVLFWCLVFSLLSPLALS) form the signal peptide. The span at 56–75 (SSSSSSSSDSSSSSSSHISL) shows a compositional bias: low complexity. Positions 56-78 (SSSSSSSSDSSSSSSSHISLGIG) are disordered. N-linked (GlcNAc...) asparagine glycosylation occurs at N156. Mn(2+)-binding residues include H167, D178, E215, H281, and H499.

This sequence belongs to the peptidase M20A family. In terms of assembly, homodimer. The cofactor is Mn(2+). As to expression, expressed in seedlings, roots, stems, leaves, flowers, siliques and seeds.

The protein resides in the endoplasmic reticulum. The catalysed reaction is allantoate + H2O + 2 H(+) = (S)-2-ureidoglycine + NH4(+) + CO2. With respect to regulation, inhibited by borate, fluoride, L-Asn and L-Asp, but not by phenylphosphorodiamidate. Its function is as follows. Involved in the catabolism of purine nucleotides. Can use allantoate as substrate, but not Nalpha-carbamoyl-L-Asp, Nalpha-carbamoyl-L-Ala or Nalpha-carbamoyl-Gly. The sequential activity of AAH, UGLYAH and UAH allows a complete purine breakdown without the intermediate generation of urea. Involved in the regulation of seed maturation and seed dormancy. This chain is Allantoate deiminase, found in Arabidopsis thaliana (Mouse-ear cress).